Here is a 526-residue protein sequence, read N- to C-terminus: Cytochrome P450 monooxygenase milC (526 aa).

Residues 2 to 20 (AIHAAYIFIAATLIALYVA) traverse the membrane as a helical segment. Cys470 provides a ligand contact to heme.

Belongs to the cytochrome P450 family. It depends on heme as a cofactor.

Its subcellular location is the membrane. It catalyses the reaction cordypyrone A + reduced [NADPH--hemoprotein reductase] + O2 = cordypyrone B + oxidized [NADPH--hemoprotein reductase] + H2O + H(+). Its pathway is secondary metabolite biosynthesis. Its function is as follows. Cytochrome P450 monooxygenase; part of the gene cluster that mediates the biosynthesis of cordypyrones A and B, 2 pyrones that show modest activities against pathogenic bacteria including methicillin-resistant Staphylococcus aureus (MRSA), Mycobacterium tuberculosis and Bacillus cereus. The HR-PKS milA catalyzes the formation of cordypyrones A via condensation of one acetate with 10 malonate units. Since milA lacks an enoyl reductase domain, the 2 beta-keto processing domains DH and KR of milA collaborate with the trans-enoyl reductase milB to catalyze the different levels of reduction. The cytochrome P450 monooxygenase milC then hydroxylates the C-22 of cordypyrones A to yield cordypyrones B. In Cordyceps militaris (strain CM01) (Caterpillar fungus), this protein is Cytochrome P450 monooxygenase milC.